The following is a 298-amino-acid chain: Ribonuclease HII (298 aa).

The interval 1–57 is disordered; the sequence is MIREPQKSAKAASKSSAPRARSSVAKATSTKATSSKAASSKAAPSKAGADAGAAKPR. A compositionally biased stretch (low complexity) spans 8-55; that stretch reads SAKAASKSSAPRARSSVAKATSTKATSSKAASSKAAPSKAGADAGAAK. The 189-residue stretch at 85–273 folds into the RNase H type-2 domain; it reads WPVAGCDEAG…VAAAWRKIEG (189 aa). A divalent metal cation is bound by residues Asp-91, Glu-92, and Asp-182.

The protein belongs to the RNase HII family. The cofactor is Mn(2+). Mg(2+) serves as cofactor.

The protein localises to the cytoplasm. It carries out the reaction Endonucleolytic cleavage to 5'-phosphomonoester.. Endonuclease that specifically degrades the RNA of RNA-DNA hybrids. This is Ribonuclease HII from Rhodopseudomonas palustris (strain BisB5).